Here is a 202-residue protein sequence, read N- to C-terminus: Peptidyl-tRNA hydrolase (202 aa).

TRNA is bound at residue tyrosine 17. Histidine 22 functions as the Proton acceptor in the catalytic mechanism. Phenylalanine 76, asparagine 78, and asparagine 124 together coordinate tRNA.

Belongs to the PTH family. As to quaternary structure, monomer.

Its subcellular location is the cytoplasm. It carries out the reaction an N-acyl-L-alpha-aminoacyl-tRNA + H2O = an N-acyl-L-amino acid + a tRNA + H(+). Functionally, hydrolyzes ribosome-free peptidyl-tRNAs (with 1 or more amino acids incorporated), which drop off the ribosome during protein synthesis, or as a result of ribosome stalling. Its function is as follows. Catalyzes the release of premature peptidyl moieties from peptidyl-tRNA molecules trapped in stalled 50S ribosomal subunits, and thus maintains levels of free tRNAs and 50S ribosomes. The protein is Peptidyl-tRNA hydrolase of Nitratidesulfovibrio vulgaris (strain DSM 19637 / Miyazaki F) (Desulfovibrio vulgaris).